A 502-amino-acid polypeptide reads, in one-letter code: Keratin, type II microfibrillar, component 5 (502 aa).

S1 carries the blocked amino end (Ser) modification. Residues 1 to 122 (SCRSYRISPG…PNAQCVKHQE (122 aa)) are head. The region spanning 122 to 433 (EKEQIKNLNS…RLLEGEEQRL (312 aa)) is the IF rod domain. Residues 123 to 157 (KEQIKNLNSRFAAFIDKVRFLEQQNKLLETKWQFY) are coil 1A. Residues 158–167 (QNQRCCESNL) form a linker 1 region. Residues 168–268 (EPLFNGYIET…YDEEIQILNA (101 aa)) are coil 1B. K228 is covalently cross-linked (Glycyl lysine isopeptide (Lys-Gly) (interchain with G-Cter in SUMO1)). Residues 269 to 285 (HISDTSVIVKMDNSRDL) form a linker 12 region. Residues 286-429 (NMDCVVAEIK…ATYRRLLEGE (144 aa)) are coil 2. A tail region spans residues 430–502 (EQRLCEGVGS…CGSSRSVRFA (73 aa)).

The protein belongs to the intermediate filament family. As to expression, hard keratin wool.

Wool microfibrillar keratin. In Ovis aries (Sheep), this protein is Keratin, type II microfibrillar, component 5.